Here is a 492-residue protein sequence, read N- to C-terminus: Proline--tRNA ligase (492 aa).

It belongs to the class-II aminoacyl-tRNA synthetase family. ProS type 3 subfamily. In terms of assembly, homodimer.

Its subcellular location is the cytoplasm. The catalysed reaction is tRNA(Pro) + L-proline + ATP = L-prolyl-tRNA(Pro) + AMP + diphosphate. In terms of biological role, catalyzes the attachment of proline to tRNA(Pro) in a two-step reaction: proline is first activated by ATP to form Pro-AMP and then transferred to the acceptor end of tRNA(Pro). In Flavobacterium psychrophilum (strain ATCC 49511 / DSM 21280 / CIP 103535 / JIP02/86), this protein is Proline--tRNA ligase.